Reading from the N-terminus, the 270-residue chain is Sulfur carrier protein FdhD (270 aa).

Composition is skewed to basic and acidic residues over residues 1-10 and 20-30; these read MSMQDHDRTE and RHLDGSSRPDW. Residues 1–30 are disordered; that stretch reads MSMQDHDRTEQGMTSLAVTRHLDGSSRPDW. The active-site Cysteine persulfide intermediate is Cys-117.

Belongs to the FdhD family.

Its subcellular location is the cytoplasm. Required for formate dehydrogenase (FDH) activity. Acts as a sulfur carrier protein that transfers sulfur from IscS to the molybdenum cofactor prior to its insertion into FDH. The sequence is that of Sulfur carrier protein FdhD from Chromobacterium violaceum (strain ATCC 12472 / DSM 30191 / JCM 1249 / CCUG 213 / NBRC 12614 / NCIMB 9131 / NCTC 9757 / MK).